The chain runs to 159 residues: Ecotin (159 aa).

The N-terminal stretch at 1 to 22 is a signal peptide; the sequence is MRPTPMTAILALSLAAAAPAMA. A disulfide bond links Cys-68 and Cys-105.

This sequence belongs to the protease inhibitor I11 (ecotin) family. In terms of assembly, homodimer.

It is found in the periplasm. In terms of biological role, general inhibitor of family S1 serine proteases. In Pseudomonas putida (strain ATCC 700007 / DSM 6899 / JCM 31910 / BCRC 17059 / LMG 24140 / F1), this protein is Ecotin.